The chain runs to 242 residues: NAD-dependent protein deacylase 1 (242 aa).

Positions 1 to 242 (MDFKILKEKL…FAMKFEEKEG (242 aa)) constitute a Deacetylase sirtuin-type domain. 21–40 (GAGISKESGIPTFRGEDGLW) contacts NAD(+). Residues Tyr65 and Arg68 each coordinate substrate. 99 to 102 (QNVD) serves as a coordination point for NAD(+). His117 (proton acceptor) is an active-site residue. 4 residues coordinate Zn(2+): Cys125, Cys128, Cys146, and Cys149. NAD(+)-binding positions include 186 to 188 (GTS) and Glu241.

It belongs to the sirtuin family. Class III subfamily. Requires Zn(2+) as cofactor.

Its subcellular location is the cytoplasm. The enzyme catalyses N(6)-acetyl-L-lysyl-[protein] + NAD(+) + H2O = 2''-O-acetyl-ADP-D-ribose + nicotinamide + L-lysyl-[protein]. It carries out the reaction N(6)-succinyl-L-lysyl-[protein] + NAD(+) + H2O = 2''-O-succinyl-ADP-D-ribose + nicotinamide + L-lysyl-[protein]. NAD-dependent lysine deacetylase and desuccinylase that specifically removes acetyl and succinyl groups on target proteins. Modulates the activities of several proteins which are inactive in their acylated form. The chain is NAD-dependent protein deacylase 1 from Caldanaerobacter subterraneus subsp. tengcongensis (strain DSM 15242 / JCM 11007 / NBRC 100824 / MB4) (Thermoanaerobacter tengcongensis).